We begin with the raw amino-acid sequence, 138 residues long: uncharacterized protein (138 aa).

Residues 1 to 73 (MCSAGQLLGG…NHTGEPVGDD (73 aa)) are disordered. Over residues 7 to 18 (LLGGGGGGGGSG) the composition is skewed to gly residues. Over residues 19 to 29 (GERDEDRDALA) the composition is skewed to basic and acidic residues. Over residues 30-43 (ERAAAGTEQESGAS) the composition is skewed to low complexity. The chain crosses the membrane as a helical span at residues 106–126 (VIVIFFWVMLWFLGLPAFGLV).

It belongs to the FAM241 family.

It localises to the membrane. This is an uncharacterized protein from Bos taurus (Bovine).